Reading from the N-terminus, the 150-residue chain is uncharacterized protein (150 aa).

Residues 49-88 are disordered; sequence KEWAENASTDEIDDFLTHDDETERDADPSSGSGPELMNKA. The segment covering 63–75 has biased composition (basic and acidic residues); the sequence is FLTHDDETERDAD.

This is an uncharacterized protein from Bacillus subtilis (strain 168).